A 195-amino-acid chain; its full sequence is Protein lin-28 homolog A (195 aa).

The CSD domain maps to 33–106 (QGSGVCKWFN…GLESTRVTGP (74 aa)). Positions 98-126 (LESTRVTGPGGAPCIGSERRPKVKGQQKR) are disordered. The tract at residues 107–130 (GGAPCIGSERRPKVKGQQKRRQKG) is flexible linker. 2 consecutive CCHC-type zinc fingers follow at residues 131-148 (DRCY…ECKL) and 153-170 (KKCH…QCPA). The Zn(2+) site is built by Cys-133, Cys-136, His-141, Cys-146, Cys-155, Cys-158, His-163, and Cys-168. Residues 175-195 (AANLEEQPISEEQELIPETME) form a disordered region. Residues 182–195 (PISEEQELIPETME) are compositionally biased toward acidic residues.

Belongs to the lin-28 family. In terms of assembly, monomer.

Its subcellular location is the cytoplasm. It is found in the rough endoplasmic reticulum. The protein localises to the P-body. It localises to the stress granule. The protein resides in the nucleus. Its subcellular location is the nucleolus. RNA-binding protein that inhibits processing of pre-let-7 miRNAs and regulates translation of mRNAs that control developmental timing, pluripotency and metabolism. Seems to recognize a common structural G-quartet (G4) feature in its miRNA and mRNA targets. 'Translational enhancer' that drives specific mRNAs to polysomes and increases the efficiency of protein synthesis. Its association with the translational machinery and target mRNAs results in an increased number of initiation events per molecule of mRNA and, indirectly, in mRNA stabilization. Suppressor of microRNA (miRNA) biogenesis, including that of let-7. Binds specific target miRNA precursors (pre-miRNAs), recognizing an 5'-GGAG-3' motif found in their terminal loop, and recruits uridylyltransferase. This results in the terminal uridylation of target pre-miRNAs. Uridylated pre-miRNAs fail to be processed by Dicer and undergo degradation. Localized to the periendoplasmic reticulum area, binds to a large number of spliced mRNAs and inhibits the translation of mRNAs destined for the ER, reducing the synthesis of transmembrane proteins, ER or Golgi lumen proteins, and secretory proteins. Binds to and enhances the translation of mRNAs for several metabolic enzymes, increasing glycolysis and oxidative phosphorylation. Which, with the let-7 repression may enhance tissue repair in adult tissue. This is Protein lin-28 homolog A (lin28a) from Xenopus tropicalis (Western clawed frog).